The sequence spans 274 residues: MAIHLYKTSTPSTRNGAVGSQVKSNPRNNLIYGQRHCGKGRNARGIITVRHRGGGHKRLYRKIDFRRNEKDISGKIVTIEYDPNRNAYICLIHYGDGEKRYILHPRGAIIGDTIVSGTEVPISMGNALPLTDMPLGTAIHNIEITLGKGGQLARAAGAVAKLIAKEGKSATLKLPSGEVRLISKNCSATVGQVGNVGVNQKSLGRAGSKRWLGKRPVVRGVVMNPVDHPHGGGEGRAPIGRKKPTTPWGYPALGRRSRKRNKYSDSLILRRRSK.

Disordered stretches follow at residues 1–23 (MAIH…SQVK) and 223–274 (MNPV…RRSK).

It belongs to the universal ribosomal protein uL2 family. As to quaternary structure, part of the 50S ribosomal subunit.

It is found in the plastid. The protein localises to the chloroplast. In Ranunculus macranthus (Large buttercup), this protein is Large ribosomal subunit protein uL2cz/uL2cy (rpl2-A).